Reading from the N-terminus, the 139-residue chain is CLAVATA3/ESR (CLE)-related protein 1 (139 aa).

A signal peptide spans 1–22; sequence MPNIFKILLIVLLAVVSFRLSA. The interval 23–90 is required for secretion from the host cytoplasm to the host apoplasm; sequence STGDKKTAND…VPSHLTNRSM (68 aa). Asn-37 and Asn-87 each carry an N-linked (GlcNAc...) asparagine glycan. A disordered region spans residues 66-139; sequence AIGRSNAQGG…SPSGPDPHHH (74 aa). Residues 100–125 are a coiled coil; it reads EKGAATRVEKMRAQLRELAEKMTDKD. The span at 106–128 shows a compositional bias: basic and acidic residues; that stretch reads RVEKMRAQLRELAEKMTDKDPKR. The CLE motif lies at 128–139; that stretch reads RLSPSGPDPHHH.

This sequence belongs to the CLV3/ESR signal peptide family. Highly expressed exclusively within the dorsal esophageal gland cell during syncytium formation in host plants (at protein level).

It localises to the secreted. Its subcellular location is the host cytoplasm. The protein resides in the host extracellular space. The protein localises to the extracellular space. It is found in the apoplast. In terms of biological role, mimics host plant CLE extracellular signal peptides that regulate cell fate. May play a role in the differentiation or division of feeding cells (syncytia) induced in plant roots during infection. This Heterodera glycines (Soybean cyst nematode worm) protein is CLAVATA3/ESR (CLE)-related protein 1 (CLE1).